Here is a 921-residue protein sequence, read N- to C-terminus: MVSALLLRARQNGRAARCLDYPKVKCWALASLPKSSLEKPGFSQVRRFSVFHPQSQVNLDLTRNIGIIAHIDAGKTTTTERMLYYSGLTRRIGDVDEGSTVTDFLPAERARGITIQSAAITFHWPPAECGNATRQDPRSPRSASSHMVNLIDTPGHADFTFEVLRSLRILDGAVCILDGVAGVEAQTEQVWHQASTYNIPRIVYVNKMDRDGAAFGRTVREVASRLGGWPAVCQIPWFEGGDGRFVGVADAINLQGLLWSGGDGKSVKRFSLSELDEAESQLAQELRRARVALVELLSEHDEIIVEKFFENEEDHLSVSPADILDSLRRCLLEGNGRKIIPIFAGASFRNIGVQPLLDSVVDLLPSPQETPDPEVAIGGVKGSLRRLLSGDLLVEQKEKAAPKGKQKKKAAVVADSRNAIKQLHGCGLAFKVVNDAKRGVLVYVRVYSGSLDRGSLLYNTNLNVSERAPRLLKMYANDAVEVDSISEGQIGVVVGLKHARTGDTLVACTTNKATPPEPLDTLQLRPIDVPPPVFFASVEPHSLAEEKRMHESLALLLREDPSLHVSIDEDSGQTLLSGMGELHLEIARDRLINDLKAKATMGPIEIGYRECPLGASGPVTKIFDREIAGRKGKAGCTAEIEPFDPETSPAPDPAALSVEIANGNQIVILAPELQIETNKKGLEESPILPPGLDVDAVRSALSNGCLAALARGPQFTFPMHSTRVTLTLSPTAHIFGNETTSASLSAATRLATSTALSNLISNPASASATPGTCLMEPLMNVIISVDEASLGAVVHDISSSRGGHIVSLDEDVPIASTDLSIPNTETPDPELDLPPIDPAKVYAPPDPFQSSTVVGGSMASDARNRPRTITAKVPLKEMVGYLKHLRSLSAGRGTFVMSVDRFEKMSPPRQKAVLTELRGVY.

A mitochondrion-targeting transit peptide spans 1 to 55 (MVSALLLRARQNGRAARCLDYPKVKCWALASLPKSSLEKPGFSQVRRFSVFHPQS). The tr-type G domain maps to 60–368 (DLTRNIGIIA…SVVDLLPSPQ (309 aa)). GTP-binding positions include 69–76 (AHIDAGKT), 152–156 (DTPGH), and 206–209 (NKMD).

Belongs to the TRAFAC class translation factor GTPase superfamily. Classic translation factor GTPase family. EF-G/EF-2 subfamily.

It localises to the mitochondrion. Mitochondrial GTPase that mediates the disassembly of ribosomes from messenger RNA at the termination of mitochondrial protein biosynthesis. Not involved in the GTP-dependent ribosomal translocation step during translation elongation. The protein is Ribosome-releasing factor 2, mitochondrial (mef2) of Emericella nidulans (strain FGSC A4 / ATCC 38163 / CBS 112.46 / NRRL 194 / M139) (Aspergillus nidulans).